The chain runs to 1353 residues: Xanthine dehydrogenase 2 (1353 aa).

Residues 7–93 (MEAIMYVNGV…GMHVISIEGV (87 aa)) form the 2Fe-2S ferredoxin-type domain. The [2Fe-2S] cluster site is built by Cys-45, Cys-50, Cys-53, Cys-75, Cys-115, Cys-118, Cys-151, and Cys-153. One can recognise an FAD-binding PCMH-type domain in the interval 249 to 434 (GGNEGITWYR…LSVFLPWTRP (186 aa)). FAD is bound by residues 277–284 (LLVGNTEV), Phe-357, 367–371 (CIGGN), Asp-380, Leu-424, and Lys-442. 2 residues coordinate Mo-molybdopterin: Gln-788 and Phe-819. Substrate-binding residues include Glu-823 and Arg-901. Arg-933 is a binding site for Mo-molybdopterin. 2 residues coordinate substrate: Phe-935 and Thr-1031. Ala-1100 contacts Mo-molybdopterin. Glu-1289 functions as the Proton acceptor in the catalytic mechanism.

It belongs to the xanthine dehydrogenase family. Homodimer. [2Fe-2S] cluster is required as a cofactor. The cofactor is FAD. Requires Mo-molybdopterin as cofactor. Expressed in roots, leaves, stems, flowers and siliques.

It catalyses the reaction xanthine + NAD(+) + H2O = urate + NADH + H(+). It carries out the reaction hypoxanthine + NAD(+) + H2O = xanthine + NADH + H(+). Its function is as follows. Key enzyme involved in purine catabolism. Catalyzes the oxidation of hypoxanthine to xanthine and the oxidation of xanthine to urate. Regulates the level of ureides and plays a role during plant growth and development and senescence. This is Xanthine dehydrogenase 2 (XDH2) from Arabidopsis thaliana (Mouse-ear cress).